The following is a 339-amino-acid chain: Ketol-acid reductoisomerase (NADP(+)) (339 aa).

The 182-residue stretch at 1 to 182 (MRVYYDRDAD…GGGRAGIIET (182 aa)) folds into the KARI N-terminal Rossmann domain. NADP(+)-binding positions include 24-27 (YGSQ), R48, S51, S53, and 83-86 (DELQ). H108 is a catalytic residue. G134 lines the NADP(+) pocket. The region spanning 183–328 (TFKEECETDL…ARLRDMMPWI (146 aa)) is the KARI C-terminal knotted domain. Positions 191, 195, 227, and 231 each coordinate Mg(2+). Position 252 (S252) interacts with substrate.

This sequence belongs to the ketol-acid reductoisomerase family. The cofactor is Mg(2+).

The catalysed reaction is (2R)-2,3-dihydroxy-3-methylbutanoate + NADP(+) = (2S)-2-acetolactate + NADPH + H(+). It catalyses the reaction (2R,3R)-2,3-dihydroxy-3-methylpentanoate + NADP(+) = (S)-2-ethyl-2-hydroxy-3-oxobutanoate + NADPH + H(+). Its pathway is amino-acid biosynthesis; L-isoleucine biosynthesis; L-isoleucine from 2-oxobutanoate: step 2/4. The protein operates within amino-acid biosynthesis; L-valine biosynthesis; L-valine from pyruvate: step 2/4. In terms of biological role, involved in the biosynthesis of branched-chain amino acids (BCAA). Catalyzes an alkyl-migration followed by a ketol-acid reduction of (S)-2-acetolactate (S2AL) to yield (R)-2,3-dihydroxy-isovalerate. In the isomerase reaction, S2AL is rearranged via a Mg-dependent methyl migration to produce 3-hydroxy-3-methyl-2-ketobutyrate (HMKB). In the reductase reaction, this 2-ketoacid undergoes a metal-dependent reduction by NADPH to yield (R)-2,3-dihydroxy-isovalerate. The sequence is that of Ketol-acid reductoisomerase (NADP(+)) from Bradyrhizobium sp. (strain ORS 278).